Here is a 219-residue protein sequence, read N- to C-terminus: Cytidylate kinase (219 aa).

Gly-9–Thr-17 lines the ATP pocket.

It belongs to the cytidylate kinase family. Type 1 subfamily.

Its subcellular location is the cytoplasm. It catalyses the reaction CMP + ATP = CDP + ADP. The catalysed reaction is dCMP + ATP = dCDP + ADP. The chain is Cytidylate kinase from Fervidobacterium nodosum (strain ATCC 35602 / DSM 5306 / Rt17-B1).